The primary structure comprises 413 residues: D-nopaline dehydrogenase (413 aa).

This sequence belongs to the lysopine/nopaline/octopine/opine/vitopine dehydrogenases family. In terms of assembly, homotetramer.

It carries out the reaction D-nopaline + NADP(+) + H2O = L-arginine + 2-oxoglutarate + NADPH + H(+). The sequence is that of D-nopaline dehydrogenase (nos) from Agrobacterium tumefaciens (strain T37).